The chain runs to 290 residues: Acetyl-coenzyme A carboxylase carboxyl transferase subunit beta (290 aa).

A CoA carboxyltransferase N-terminal domain is found at Leu27–Ala290. Cys31, Cys34, Cys50, and Cys53 together coordinate Zn(2+). The C4-type zinc-finger motif lies at Cys31 to Cys53.

It belongs to the AccD/PCCB family. In terms of assembly, acetyl-CoA carboxylase is a heterohexamer composed of biotin carboxyl carrier protein (AccB), biotin carboxylase (AccC) and two subunits each of ACCase subunit alpha (AccA) and ACCase subunit beta (AccD). The cofactor is Zn(2+).

The protein resides in the cytoplasm. The enzyme catalyses N(6)-carboxybiotinyl-L-lysyl-[protein] + acetyl-CoA = N(6)-biotinyl-L-lysyl-[protein] + malonyl-CoA. The protein operates within lipid metabolism; malonyl-CoA biosynthesis; malonyl-CoA from acetyl-CoA: step 1/1. Component of the acetyl coenzyme A carboxylase (ACC) complex. Biotin carboxylase (BC) catalyzes the carboxylation of biotin on its carrier protein (BCCP) and then the CO(2) group is transferred by the transcarboxylase to acetyl-CoA to form malonyl-CoA. The sequence is that of Acetyl-coenzyme A carboxylase carboxyl transferase subunit beta from Cupriavidus taiwanensis (strain DSM 17343 / BCRC 17206 / CCUG 44338 / CIP 107171 / LMG 19424 / R1) (Ralstonia taiwanensis (strain LMG 19424)).